We begin with the raw amino-acid sequence, 347 residues long: Heme A synthase (347 aa).

The next 8 helical transmembrane spans lie at 14 to 34 (VKIWLCICCIGILVMVFIGGI), 96 to 116 (FHRLLGRIVGLVFLIPFLYFM), 129 to 149 (FILIAFLILVQGVMGWYMVKS), 162 to 182 (LAMHLLLALAIFYLLWKHFLL), 199 to 219 (VFYIIISLITIQITCGALVAG), 260 to 280 (FIHEVIALLILIIVVITLLVL), 287 to 307 (MYLLLALLLIQLTLGILTFIY), and 311 to 331 (IILASLHQVTAFILFASSIYL). A heme-binding site is contributed by histidine 262. Histidine 317 contacts heme.

This sequence belongs to the COX15/CtaA family. Type 2 subfamily. In terms of assembly, interacts with CtaB. It depends on heme b as a cofactor.

It is found in the cell membrane. The catalysed reaction is Fe(II)-heme o + 2 A + H2O = Fe(II)-heme a + 2 AH2. Its pathway is porphyrin-containing compound metabolism; heme A biosynthesis; heme A from heme O: step 1/1. Its function is as follows. Catalyzes the conversion of heme O to heme A by two successive hydroxylations of the methyl group at C8. The first hydroxylation forms heme I, the second hydroxylation results in an unstable dihydroxymethyl group, which spontaneously dehydrates, resulting in the formyl group of heme A. The sequence is that of Heme A synthase from Ehrlichia ruminantium (strain Welgevonden).